The primary structure comprises 409 residues: uncharacterized protein (409 aa).

An N-terminal signal peptide occupies residues 1-29 (MARSRCVHRVVHQAACIGVIGLSTSALTT). Cysteine 30 carries the N-palmitoyl cysteine lipid modification. The S-diacylglycerol cysteine moiety is linked to residue cysteine 30.

It belongs to the TP013X lipoprotein family.

Its subcellular location is the cell membrane. This is an uncharacterized protein from Treponema pallidum (strain Nichols).